A 566-amino-acid polypeptide reads, in one-letter code: Osteoclast stimulatory transmembrane protein (566 aa).

Over 1–51 the chain is Cytoplasmic; that stretch reads MPGHPGAAEQLVKTGWRSWHLGFWKALAPLQAAWDAFSQPVPASCGQLLTQ. Residues 52–72 traverse the membrane as a helical segment; that stretch reads LLLCASLAAAAAGLVYHWLAS. At 73–81 the chain is on the extracellular side; the sequence is LLLYPPGPS. A helical transmembrane segment spans residues 82 to 102; it reads AMVATVCGLLVFLSLGLVPPV. Residues 103 to 128 lie on the Cytoplasmic side of the membrane; sequence RCLFALSVPTLGMEQGRRLLLSYSTA. A helical membrane pass occupies residues 129–149; sequence TLAIAVVPNVLANVGAAGQVL. Residues 150 to 227 lie on the Extracellular side of the membrane; that stretch reads RCVTEGSLES…ARAAALGTQR (78 aa). A helical membrane pass occupies residues 228-248; that stretch reads VVTGLFMLGLLVESAWYLHCY. The Cytoplasmic segment spans residues 249-304; the sequence is LTDLRFDNIYATQQLTQRLAQAQATHLLAPPPTWLLQAAQLRLSQEELLSCLLRLG. Residues 305–325 traverse the membrane as a helical segment; the sequence is LLALLLVATAVAVATDHVAFL. At 326–398 the chain is on the extracellular side; the sequence is LAQATVDWAQ…CPLLPARRPR (73 aa). A helical membrane pass occupies residues 399-419; it reads AAAPLAAGALQLLAGSTVLLE. The Cytoplasmic segment spans residues 420–566; it reads AYARRLRHAI…EGNTGHDRPG (147 aa).

It is found in the membrane. In terms of biological role, probable cell surface receptor that plays a role in cellular fusion and cell differentiation. Cooperates with DCSTAMP in modulating cell-cell fusion in both osteoclasts and foreign body giant cells (FBGCs). Involved in osteoclast bone resorption. Promotes osteoclast differentiation and may play a role in the multinucleated osteoclast maturation. The chain is Osteoclast stimulatory transmembrane protein (OCSTAMP) from Homo sapiens (Human).